We begin with the raw amino-acid sequence, 366 residues long: Putative zinc metalloprotease slr1821 (366 aa).

Histidine 20 lines the Zn(2+) pocket. Glutamate 21 is a catalytic residue. Histidine 24 contributes to the Zn(2+) binding site. 3 consecutive transmembrane segments (helical) span residues 95-115 (AIVI…LLIG), 293-313 (AVIN…FLLI), and 325-345 (FQMG…VFLI). The 83-residue stretch at 106–188 (LVFAYFLLIG…VPITVEVQRG (83 aa)) folds into the PDZ domain.

It belongs to the peptidase M50B family. Requires Zn(2+) as cofactor.

It is found in the cell inner membrane. The chain is Putative zinc metalloprotease slr1821 from Synechocystis sp. (strain ATCC 27184 / PCC 6803 / Kazusa).